We begin with the raw amino-acid sequence, 319 residues long: ATP-dependent 6-phosphofructokinase (319 aa).

Residue Gly-11 participates in ATP binding. 21–25 contacts ADP; it reads RAVVR. ATP contacts are provided by residues 72-73 and 102-105; these read RC and GDGS. Asp-103 serves as a coordination point for Mg(2+). Substrate is bound at residue 125–127; it reads TID. Residue Asp-127 is the Proton acceptor of the active site. Arg-154 provides a ligand contact to ADP. Residues Arg-162 and 169–171 contribute to the substrate site; that span reads MGR. ADP contacts are provided by residues 185–187, Arg-211, and 213–215; these read GAE and KKH. Substrate is bound by residues Glu-222, Arg-243, and 249 to 252; that span reads HVQR.

This sequence belongs to the phosphofructokinase type A (PFKA) family. ATP-dependent PFK group I subfamily. Prokaryotic clade 'B1' sub-subfamily. In terms of assembly, homotetramer. Requires Mg(2+) as cofactor.

It is found in the cytoplasm. It carries out the reaction beta-D-fructose 6-phosphate + ATP = beta-D-fructose 1,6-bisphosphate + ADP + H(+). The protein operates within carbohydrate degradation; glycolysis; D-glyceraldehyde 3-phosphate and glycerone phosphate from D-glucose: step 3/4. Allosterically activated by ADP and other diphosphonucleosides, and allosterically inhibited by phosphoenolpyruvate. In terms of biological role, catalyzes the phosphorylation of D-fructose 6-phosphate to fructose 1,6-bisphosphate by ATP, the first committing step of glycolysis. This is ATP-dependent 6-phosphofructokinase from Bacillus cereus (strain B4264).